The sequence spans 119 residues: UPF0145 protein Bcep18194_B0595 (119 aa).

Belongs to the UPF0145 family.

This is UPF0145 protein Bcep18194_B0595 from Burkholderia lata (strain ATCC 17760 / DSM 23089 / LMG 22485 / NCIMB 9086 / R18194 / 383).